A 72-amino-acid chain; its full sequence is Inner membrane protein YmgF (72 aa).

At 1–9 (MNNSNNLDY) the chain is on the cytoplasmic side. A helical membrane pass occupies residues 10–30 (FTLYIIFSIAFMLITLLVILI). Residues 31–34 (AKPS) are Periplasmic-facing. Residues 35–55 (TGLGEVLVTINLLNALVWLAI) traverse the membrane as a helical segment. Residues 56–72 (NLVNRLRERLVNHRDQQ) are Cytoplasmic-facing.

As to quaternary structure, interacts with FtsL, FtsQ, FtsI, FtsN, and probably many other cell division proteins.

The protein localises to the cell inner membrane. Its function is as follows. Could be involved in cell division. May participate in the stabilization of the cell divisome under specific conditions. The polypeptide is Inner membrane protein YmgF (ymgF) (Escherichia coli (strain K12)).